A 154-amino-acid chain; its full sequence is Spermatogenesis-associated protein 19, mitochondrial (154 aa).

Residues 1–24 (MIITTWIMYILARKSIGLPFPPRV) constitute a mitochondrion transit peptide. A phosphoserine mark is found at serine 26 and serine 116.

As to expression, expressed in the testis.

The protein localises to the mitochondrion outer membrane. The protein resides in the mitochondrion. Its subcellular location is the cell projection. It is found in the cilium. It localises to the flagellum. Functionally, essential for sperm motility and male fertility. Plays an important role in sperm motility by regulating the organization and function of the mitochondria and is also required for correct sperm midpiece assembly. The chain is Spermatogenesis-associated protein 19, mitochondrial (Spata19) from Rattus norvegicus (Rat).